The chain runs to 213 residues: MRGLLIAFEGIDGSGKSSQAVLLKDWIEMRRDVYLTEWNSSEWIHDIIKEAKKKNMLTSITFSLIHATDFSDRYERYILPMLKSGFVVICDRYVYTAYARDVVRNVDFDWVKRLYSFAIKPNFTFYIRVTPEIALERIRKAKRKIKPQEAGIDILGEIPLEEGFLKYQSRIVEIYDKIAKEESNFITIDGNRPLKDVQIDIRKILGEYIDNSL.

10–17 (GIDGSGKS) lines the ATP pocket.

It belongs to the thymidylate kinase family.

The enzyme catalyses dTMP + ATP = dTDP + ADP. The chain is Probable thymidylate kinase 2 (tmk2) from Saccharolobus solfataricus (strain ATCC 35092 / DSM 1617 / JCM 11322 / P2) (Sulfolobus solfataricus).